We begin with the raw amino-acid sequence, 133 residues long: Inhibitor of g-type lysozyme (133 aa).

The first 22 residues, 1-22 (MKIKSIRKAVLLLALLTSTSFA), serve as a signal peptide directing secretion.

It localises to the periplasm. Its function is as follows. Inhibits activity of g-type lysozyme, which confers increased lysozyme tolerance to the bacterium. The protein is Inhibitor of g-type lysozyme (pliG) of Escherichia coli (strain K12).